Reading from the N-terminus, the 438-residue chain is MNTTVYALATPAGRSGVAVIRLSGGGAGGMLDALAGLPRPQPRMATLRALRDSGGSVMDRGLVLWFPGPGSFTGEDSAEFHVHGGPAVIDAVLSALDEAGAHPAEAGEFTRRAFENEKIDLTEAEGLADLIDAETEGQRVQALSQMSGSLRRLYDGWRDALITAMASIEGEIDFPDEADVPDALSHAAYEPLSELIGSMFEHLDDGRRGERIRIGFSIVLIGAPNAGKSSLLNCLARRDAAIVTDIPGTTRDIVEVQLTLGGFPVVISDTAGLREAVDAIEAEGVRRALDRAEHADLRIGVADARSDEELVDLEGRLTDGDLLVLNKLDLGLVSERDGAYRLSAKSGDGVEALEARIEQIVRDRLSVREMPALSRVRHRRAVETALEALSRCRDQLADAPELAGEDARLAVRALESLTGRVDVEDILDRVFSQFCIGK.

3 residues coordinate (6S)-5-formyl-5,6,7,8-tetrahydrofolate: arginine 21, glutamate 79, and lysine 118. Residues glycine 215–arginine 362 enclose the TrmE-type G domain. Residue asparagine 225 participates in K(+) binding. GTP is bound by residues asparagine 225–serine 230, threonine 244–threonine 250, and aspartate 269–glycine 272. Residue serine 229 coordinates Mg(2+). Threonine 244, isoleucine 246, and threonine 249 together coordinate K(+). Mg(2+) is bound at residue threonine 250. Lysine 438 serves as a coordination point for (6S)-5-formyl-5,6,7,8-tetrahydrofolate.

Belongs to the TRAFAC class TrmE-Era-EngA-EngB-Septin-like GTPase superfamily. TrmE GTPase family. As to quaternary structure, homodimer. Heterotetramer of two MnmE and two MnmG subunits. Requires K(+) as cofactor.

It localises to the cytoplasm. Exhibits a very high intrinsic GTPase hydrolysis rate. Involved in the addition of a carboxymethylaminomethyl (cmnm) group at the wobble position (U34) of certain tRNAs, forming tRNA-cmnm(5)s(2)U34. The sequence is that of tRNA modification GTPase MnmE from Maricaulis maris (strain MCS10) (Caulobacter maris).